Consider the following 63-residue polypeptide: Large ribosomal subunit protein uL29 (63 aa).

This sequence belongs to the universal ribosomal protein uL29 family.

The sequence is that of Large ribosomal subunit protein uL29 from Alcanivorax borkumensis (strain ATCC 700651 / DSM 11573 / NCIMB 13689 / SK2).